The following is a 291-amino-acid chain: Insulin-like growth factor-binding protein 3 (291 aa).

A signal peptide spans 1–27; sequence MQRARPTLWAAALTLLVLLRGPPVARA. An IGF-binding region spans residues 28-134; that stretch reads GASSAGLGPV…AYLLPAPPAP (107 aa). Residues 36–117 form the IGFBP N-terminal domain; sequence PVVRCEPCDA…LDGRGLCVNA (82 aa). 6 cysteine pairs are disulfide-bonded: Cys-40–Cys-67, Cys-43–Cys-69, Cys-51–Cys-70, Cys-58–Cys-73, Cys-81–Cys-94, and Cys-88–Cys-114. 2 N-linked (GlcNAc...) (complex) asparagine glycosylation sites follow: Asn-116 and Asn-136. Disordered stretches follow at residues 130–162 and 189–211; these read APPA…RVSD and DYES…TEYG. The segment covering 146-156 has biased composition (low complexity); it reads AGSVESPSVSS. Ser-148 is modified (phosphoserine; by FAM20C). Positions 191–202 are enriched in polar residues; that stretch reads ESQSTDTQNFSS. A Phosphoserine; by CK2 modification is found at Ser-194. An N-linked (GlcNAc...) (complex) asparagine glycan is attached at Asn-199. Ser-201 is subject to Phosphoserine; by FAM20C. Ser-202 carries the phosphoserine; by CK2 modification. The 76-residue stretch at 210-285 folds into the Thyroglobulin type-1 domain; sequence YGPCRREMED…TTKGKEDVHC (76 aa). 3 disulfide bridges follow: Cys-213–Cys-240, Cys-251–Cys-262, and Cys-264–Cys-285.

In terms of assembly, interacts with XLKD1. Binds IGF2 more than IGF1. Forms a ternary complex of about 140 to 150 kDa with IGF1 or IGF2 and a 85 kDa glycoprotein (ALS). Interacts with humanin; humanin competes with importin KPNB1 for binding to IGFBP3, blocking IGFBP3 nuclear import and IGFBP3-mediated apoptosis. Interacts with TMEM219. Interacts with RXRA; this interaction modulates the transcriptional activity of RXRA. Interacts with LRP1; this interaction mediates cell growth inhibition independent of IGF1. Phosphorylated by FAM20C in the extracellular medium. Phosphorylated by CK2; resulting in decreased nuclear localization. Expressed by most tissues. Present in plasma.

The protein localises to the secreted. It is found in the nucleus. Its function is as follows. Multifunctional protein that plays a critical role in regulating the availability of IGFs such as IGF1 and IGF2 to their receptors and thereby regulates IGF-mediated cellular processes including proliferation, differentiation, and apoptosis in a cell-type specific manner. Also exhibits IGF-independent antiproliferative and apoptotic effects mediated by its receptor TMEM219/IGFBP-3R. Inhibits the positive effect of humanin on insulin sensitivity. Promotes testicular germ cell apoptosis. Acts via LRP-1/alpha2M receptor, also known as TGF-beta type V receptor, to mediate cell growth inhibition independent of IGF1. Mechanistically, induces serine-specific dephosphorylation of IRS1 or IRS2 upon ligation to its receptor, leading to the inhibitory cascade. In the nucleus, interacts with transcription factors such as retinoid X receptor-alpha/RXRA to regulate transcriptional signaling and apoptosis. The sequence is that of Insulin-like growth factor-binding protein 3 (IGFBP3) from Homo sapiens (Human).